We begin with the raw amino-acid sequence, 176 residues long: MAAAPAVCASQGSPPGAPSAPAAAPAPAAGLGRCRMALLLAVALDVAGMAALLTGVFAQLQVRGRDFGDLLIYSGALLVFLSLLGWILWYTGNIEISRQELERDYGLRPSALARLARKLSRRWSAPAAAGQRPAPGSRRARRAARAPPPPAAGSRRVRLQLATLEAGPGAAGAGSE.

The disordered stretch occupies residues 1–22 (MAAAPAVCASQGSPPGAPSAPA). Residues 1 to 36 (MAAAPAVCASQGSPPGAPSAPAAAPAPAAGLGRCRM) lie on the Cytoplasmic side of the membrane. Positions 9–22 (ASQGSPPGAPSAPA) are enriched in low complexity. A helical membrane pass occupies residues 37-57 (ALLLAVALDVAGMAALLTGVF). The Extracellular segment spans residues 58 to 69 (AQLQVRGRDFGD). The helical transmembrane segment at 70–90 (LLIYSGALLVFLSLLGWILWY) threads the bilayer. Over 91–176 (TGNIEISRQE…GPGAAGAGSE (86 aa)) the chain is Cytoplasmic. Residues 124 to 137 (SAPAAAGQRPAPGS) show a composition bias toward low complexity. The disordered stretch occupies residues 124–157 (SAPAAAGQRPAPGSRRARRAARAPPPPAAGSRRV). Position 175 is a phosphoserine (Ser-175).

Its subcellular location is the membrane. The sequence is that of Transmembrane protein 238 (TMEM238) from Homo sapiens (Human).